We begin with the raw amino-acid sequence, 54 residues long: UPF0391 membrane protein Rmet_0093 (54 aa).

2 consecutive transmembrane segments (helical) span residues 5-25 and 30-50; these read ALVF…GIAA and IAKI…VMGL.

Belongs to the UPF0391 family.

It is found in the cell membrane. This chain is UPF0391 membrane protein Rmet_0093, found in Cupriavidus metallidurans (strain ATCC 43123 / DSM 2839 / NBRC 102507 / CH34) (Ralstonia metallidurans).